Here is a 402-residue protein sequence, read N- to C-terminus: Glutamyl-tRNA reductase (402 aa).

Substrate contacts are provided by residues 48 to 51, Ser91, 96 to 98, and Gln102; these read TCNR and EDQ. The active-site Nucleophile is Cys49. 171–176 is a binding site for NADP(+); that stretch reads GAGKMG.

The protein belongs to the glutamyl-tRNA reductase family. As to quaternary structure, homodimer.

It catalyses the reaction (S)-4-amino-5-oxopentanoate + tRNA(Glu) + NADP(+) = L-glutamyl-tRNA(Glu) + NADPH + H(+). Its pathway is porphyrin-containing compound metabolism; protoporphyrin-IX biosynthesis; 5-aminolevulinate from L-glutamyl-tRNA(Glu): step 1/2. Functionally, catalyzes the NADPH-dependent reduction of glutamyl-tRNA(Glu) to glutamate 1-semialdehyde (GSA). In Methanothermobacter thermautotrophicus (strain ATCC 29096 / DSM 1053 / JCM 10044 / NBRC 100330 / Delta H) (Methanobacterium thermoautotrophicum), this protein is Glutamyl-tRNA reductase.